Consider the following 105-residue polypeptide: MEEVGGNGGPARIAECGKIGSGTINSNVVPSVNLPSPSVKPSVTPSVKKPPHVIRSDYSKPREKPAKVAKKPTVKNDKKPKPVAIVAPTGIIKTFKTTPNPNRNL.

A compositionally biased stretch (low complexity) spans 31–47 (SVNLPSPSVKPSVTPSV). The disordered stretch occupies residues 31–80 (SVNLPSPSVKPSVTPSVKKPPHVIRSDYSKPREKPAKVAKKPTVKNDKKP). Residues 54–66 (IRSDYSKPREKPA) show a composition bias toward basic and acidic residues.

This is an uncharacterized protein from Caenorhabditis elegans.